A 422-amino-acid chain; its full sequence is MTVKTTVSTKDIDEAFLRLKDIVKETPLQLDHYLSQKYDCKVYLKREDLQWVRSFKLRGAYNAISVLSDEAKSKGITCASAGNHAQGVAYTAKKLNLNAVIFMPVTTPLQKVNQVKFFGNSNVEVVLTGDTFDHCLAEALTYTSEHQMNFIDPFNNVHTISGQGTLAKEMLEQAKSDNVNFDYLFAAIGGGGLISGISTYFKTYSPTTKIIGVEPSGASSMYESVVVNNQVVTLPNIDKFVDGASVARVGDITFEIAKENVDDYVQVDEGAVCSTILDMYSKQAIVAEPAGALSVSALENYKDHIKGKTVVCVISGGNNDINRMKEIEERSLLYEEMKHYFILNFPQRPGALREFVNDVLGPQDDITKFEYLKKSSQNTGTVIIGIQLKDHDDLIQLKQRVNHFDPSNIYINENKMLYSLLI.

N6-(pyridoxal phosphate)lysine is present on Lys56. Pyridoxal 5'-phosphate-binding positions include Asn83, Gly189–Leu193, and Ser315. An ACT-like domain is found at His339–Glu413.

The protein belongs to the serine/threonine dehydratase family. Homotetramer. The cofactor is pyridoxal 5'-phosphate.

It carries out the reaction L-threonine = 2-oxobutanoate + NH4(+). It functions in the pathway amino-acid biosynthesis; L-isoleucine biosynthesis; 2-oxobutanoate from L-threonine: step 1/1. Functionally, catalyzes the anaerobic formation of alpha-ketobutyrate and ammonia from threonine in a two-step reaction. The first step involved a dehydration of threonine and a production of enamine intermediates (aminocrotonate), which tautomerizes to its imine form (iminobutyrate). Both intermediates are unstable and short-lived. The second step is the nonenzymatic hydrolysis of the enamine/imine intermediates to form 2-ketobutyrate and free ammonia. In the low water environment of the cell, the second step is accelerated by RidA. The polypeptide is L-threonine dehydratase biosynthetic IlvA (ilvA) (Staphylococcus aureus (strain NCTC 8325 / PS 47)).